A 4128-amino-acid polypeptide reads, in one-letter code: DNA-dependent protein kinase catalytic subunit (4128 aa).

An N6-acetyllysine modification is found at K117. An HEAT 1 repeat occupies 288–323 (DNYITLFEVLSKWCSHTNVELKKAAHSALESFLRQI). 4 positions are modified to phosphoserine: S511, S686, S840, and S891. HEAT repeat units follow at residues 1001 to 1037 (QDTV…LKWS) and 1050 to 1086 (PVNS…YKEF). Position 1062 is a phosphoserine (S1062). The residue at position 1206 (K1206) is an N6-acetyllysine. The segment at 1501-1536 (LDPSCKSLANGLLELAFGFGGLCDHLVSLLLNSAML) is interaction with C1D. The interval 1501-1536 (LDPSCKSLANGLLELAFGFGGLCDHLVSLLLNSAML) is leucine-zipper. The TPR 1 repeat unit spans residues 1720-1753 (PMKSDEFPPDSLKYNNYVDCMKKFLDALELSQSP). Residue K1967 is modified to N6-acetyllysine. The segment at 2049–2071 (YSYSSQDRKPTTGHFQRREHQDS) is disordered. S2053 is subject to Phosphoserine; by autocatalysis. Residues 2054–2070 (QDRKPTTGHFQRREHQD) are compositionally biased toward basic and acidic residues. The residue at position 2255 (K2255) is an N6-acetyllysine. Positions 2432–3213 (LDIVYKMVAK…DHSMSVDEDE (782 aa)) are KIP-binding. T2531 carries the post-translational modification Phosphothreonine. T2605 is modified (phosphothreonine; by autocatalysis). S2608 carries the phosphoserine; by autocatalysis modification. A disordered region spans residues 2614 to 2635 (TQTQEGPLSDQRQKPGQVRATQ). A phosphothreonine; by autocatalysis mark is found at T2634 and T2643. The interval 2738-2766 (EKLSLLYAKRGLMEQKLEKDIKSEFKMKQ) is may split the end of the DNA molecule, with the two strands separating around the region. The region spanning 2907-3539 (PTKRVRGKTC…IYPFIISSES (633 aa)) is the FAT domain. TPR repeat units follow at residues 2921 to 2954 (VLRW…TQDT) and 2956 to 2983 (NALL…LEWV). S3206 carries the phosphoserine modification. N6-acetyllysine is present on residues K3241, K3260, K3638, and K3642. The PI3K/PI4K catalytic domain maps to 3722–4053 (FDERVKVMLS…IRYAKRKLAG (332 aa)). Positions 3728 to 3734 (VMLSLRK) are G-loop. 2 positions are modified to phosphoserine: S3731 and S3821. A catalytic loop region spans residues 3919-3927 (GIGDRHLNN). Positions 3939–3964 (GIDFGHAFGSATQFLPVPELMPFRLT) are activation loop. A Phosphoserine modification is found at S4026. In terms of domain architecture, FATC spans 4096–4128 (SGLSEETQVKCLVDQATDPNILGRTWEGWEPWM).

This sequence belongs to the PI3/PI4-kinase family. In terms of assembly, DNA-PK is a heterotrimer of PRKDC and the Ku dimer (composed of XRCC6/Ku70 and XRCC5/Ku86). Formation of this complex may be promoted by interaction with ILF3. Component of the core long-range non-homologous end joining (NHEJ) complex (also named DNA-PK complex) composed of PRKDC, LIG4, XRCC4, XRCC6/Ku70, XRCC5/Ku86 and NHEJ1/XLF. Additional component of the NHEJ complex includes PAXX. Following autophosphorylation, PRKDC dissociates from DNA. Interacts with DNA-PKcs-interacting protein (KIP) with the region upstream the kinase domain. PRKDC alone also interacts with and phosphorylates DCLRE1C, thereby activating the latent endonuclease activity of this protein. Interacts with C1D. Interacts with TTI1 and TELO2. Interacts with CIB1. Interacts with SETX. Interacts with NR4A3; the DNA-dependent protein kinase complex DNA-PK phosphorylates and activates NR4A3 and prevents NR4A3 ubiquitination and degradation. Interacts with BRAT1. Part of the HDP-RNP complex composed of at least HEXIM1, PRKDC, XRCC5, XRCC6, paraspeckle proteins (SFPQ, NONO, PSPC1, RBM14, and MATR3) and NEAT1 RNA. Interacts with KAT5. Post-translationally, autophosphorylated at two clusters, the T2609 cluster and the S2056 cluster. Autophosphorylated on Ser-2053, Thr-2605, Thr-2634 and Thr-2643. Ser-2053 and Thr-2605 are DNA damage-inducible phosphorylation sites (inducible with ionizing radiation, IR) dephosphorylated by PPP5C. Autophosphorylation induces a conformational change that leads to remodeling of the DNA-PK complex, requisite for efficient end processing and DNA repair. Autophosphorylation in trans within DNA-PK complexes loaded on DNA ends leads to the dissociation of PRKDC from DNA and the transition into the short-range NHEJ complex. Autophosphorylation of the T2609 cluster is required for hematopoietic development and protein synthesis in erythrocytes precursors. S-nitrosylated by GAPDH. In terms of processing, polyubiquitinated by RNF144A, leading to proteasomal degradation.

It localises to the nucleus. The protein resides in the nucleolus. Its subcellular location is the cytoplasm. It is found in the cytosol. The catalysed reaction is L-seryl-[protein] + ATP = O-phospho-L-seryl-[protein] + ADP + H(+). The enzyme catalyses L-threonyl-[protein] + ATP = O-phospho-L-threonyl-[protein] + ADP + H(+). Its activity is regulated as follows. Activity seems to be attenuated by autophosphorylation. Binding to the SL1 region of U3 small nucleolar RNA promotes auto-phosphorylation activity. Inhibited by wortmannin. In terms of biological role, serine/threonine-protein kinase that acts as a molecular sensor for DNA damage. Involved in DNA non-homologous end joining (NHEJ) required for double-strand break (DSB) repair and V(D)J recombination. Must be bound to DNA to express its catalytic properties. Promotes processing of hairpin DNA structures in V(D)J recombination by activation of the hairpin endonuclease artemis (DCLRE1C). Recruited by XRCC5 and XRCC6 to DNA ends and is required to (1) protect and align broken ends of DNA, thereby preventing their degradation, (2) and sequester the DSB for repair by NHEJ. Acts as a scaffold protein to aid the localization of DNA repair proteins to the site of damage. The assembly of the DNA-PK complex at DNA ends is also required for the NHEJ ligation step. Found at the ends of chromosomes, suggesting a further role in the maintenance of telomeric stability and the prevention of chromosomal end fusion. Also involved in modulation of transcription. As part of the DNA-PK complex, involved in the early steps of ribosome assembly by promoting the processing of precursor rRNA into mature 18S rRNA in the small-subunit processome. Binding to U3 small nucleolar RNA, recruits PRKDC and XRCC5/Ku86 to the small-subunit processome. Recognizes the substrate consensus sequence [ST]-Q. Phosphorylates 'Ser-139' of histone variant H2AX, thereby regulating DNA damage response mechanism. Phosphorylates ASF1A, DCLRE1C, c-Abl/ABL1, histone H1, HSPCA, c-jun/JUN, p53/TP53, PARP1, POU2F1, DHX9, FH, SRF, NHEJ1/XLF, XRCC1, XRCC4, XRCC5, XRCC6, WRN, MYC and RFA2. Can phosphorylate C1D not only in the presence of linear DNA but also in the presence of supercoiled DNA. Ability to phosphorylate p53/TP53 in the presence of supercoiled DNA is dependent on C1D. Acts as a regulator of the phosphatidylinositol 3-kinase/protein kinase B signal transduction by mediating phosphorylation of 'Ser-473' of protein kinase B (PKB/AKT1, PKB/AKT2, PKB/AKT3), promoting their activation. Contributes to the determination of the circadian period length by antagonizing phosphorylation of CRY1 'Ser-588' and increasing CRY1 protein stability, most likely through an indirect mechanism. Plays a role in the regulation of DNA virus-mediated innate immune response by assembling into the HDP-RNP complex, a complex that serves as a platform for IRF3 phosphorylation and subsequent innate immune response activation through the cGAS-STING pathway. Also regulates the cGAS-STING pathway by catalyzing phosphorylation of CGAS, thereby impairing CGAS oligomerization and activation. Also regulates the cGAS-STING pathway by mediating phosphorylation of PARP1. In Mus musculus (Mouse), this protein is DNA-dependent protein kinase catalytic subunit (Prkdc).